Consider the following 586-residue polypeptide: Putative Lon protease homolog (586 aa).

The region spanning 346 to 543 is the Lon proteolytic domain; the sequence is GERIGQINAL…TDALPLLLNL (198 aa). Residues Ser438 and Lys481 contribute to the active site.

Belongs to the peptidase S16 family.

This is Putative Lon protease homolog (ycbZ) from Escherichia coli (strain K12).